The sequence spans 155 residues: Ribonuclease HI (155 aa).

In terms of domain architecture, RNase H type-1 spans 1-142 (MTKQVEIFTD…CDELARAAAE (142 aa)). Mg(2+) is bound by residues Asp10, Glu48, Asp70, and Asp134.

The protein belongs to the RNase H family. As to quaternary structure, monomer. Mg(2+) serves as cofactor.

Its subcellular location is the cytoplasm. It carries out the reaction Endonucleolytic cleavage to 5'-phosphomonoester.. In terms of biological role, endonuclease that specifically degrades the RNA of RNA-DNA hybrids. This is Ribonuclease HI from Vibrio vulnificus (strain CMCP6).